Reading from the N-terminus, the 134-residue chain is Translation initiation factor 2 subunit beta (134 aa).

This sequence belongs to the eIF-2-beta/eIF-5 family. In terms of assembly, heterotrimer composed of an alpha, a beta and a gamma chain.

EIF-2 functions in the early steps of protein synthesis by forming a ternary complex with GTP and initiator tRNA. This chain is Translation initiation factor 2 subunit beta, found in Pyrobaculum arsenaticum (strain DSM 13514 / JCM 11321 / PZ6).